Here is a 638-residue protein sequence, read N- to C-terminus: Golgin subfamily A member 8S (638 aa).

Residues 1–11 (MWPQARLPPHP) show a composition bias toward pro residues. The interval 1 to 84 (MWPQARLPPH…GESPTSSATL (84 aa)) is disordered. Positions 50–62 (TNGSIHETATSGG) are enriched in polar residues. Coiled-coil stretches lie at residues 105 to 160 (VSQL…LNTD), 223 to 275 (LEQS…MSQE), and 318 to 417 (EAEL…QQKQ). Disordered regions lie at residues 427-453 (ALPG…PSIP), 510-532 (KDAA…DEAA), and 556-575 (AHNP…ELGA). Over residues 434–446 (GGGHLDSEGEEAP) the composition is skewed to basic and acidic residues. A compositionally biased stretch (gly residues) spans 514–525 (LGGGHHQAGAQG). Over residues 561-574 (DEPGPGAPAPQELG) the composition is skewed to low complexity.

It belongs to the GOLGA8 family.

In Homo sapiens (Human), this protein is Golgin subfamily A member 8S.